The primary structure comprises 971 residues: Protein cwh43 (971 aa).

Positions 1 to 242 are PGAP2-like; the sequence is MTEKTSSLVF…PSSFATRKKE (242 aa). 19 helical membrane passes run 15 to 35, 71 to 91, 101 to 121, 129 to 149, 161 to 181, 188 to 208, 286 to 306, 313 to 333, 336 to 356, 366 to 386, 397 to 417, 432 to 452, 467 to 487, 509 to 529, 532 to 552, 555 to 575, 588 to 608, 622 to 642, and 673 to 693; these read VALV…ALAL, VFQW…LLWF, VIIT…WVYV, WHDI…ILVS, IRNI…YWYI, IPGA…WDIL, VYLS…VWYF, ISGY…GIPL, KFAS…IAAY, FVTA…FSNI, ISTF…FFSN, QIPA…FHVQ, ITAL…HTFL, YPHG…APYL, SGAF…FMYI, GWCS…YSFA, VWGG…WVVA, TSYI…AYSG, and LLTG…NMPP. Residues 243 to 971 are PGAP2IP-like; the sequence is KGEHLSYAEA…LVVHEPWYYD (729 aa). Residue His-826 is part of the active site.

It in the N-terminal section; belongs to the PGAP2 family. This sequence in the C-terminal section; belongs to the PGAP2IP family.

It localises to the cell membrane. Its subcellular location is the endoplasmic reticulum membrane. Functionally, involved in the maintenance of cell wall integrity. Required for the replacement of the diacylglycerol moiety by ceramides during GPI-anchor maturation. In Schizosaccharomyces pombe (strain 972 / ATCC 24843) (Fission yeast), this protein is Protein cwh43 (cwh43).